The following is a 218-amino-acid chain: Small ribosomal subunit protein uS3c (218 aa).

The KH type-2 domain maps to 47-118; sequence VQKNMRTSSG…KLNIAVTRIA (72 aa).

The protein belongs to the universal ribosomal protein uS3 family. Part of the 30S ribosomal subunit.

It localises to the plastid. Its subcellular location is the chloroplast. The chain is Small ribosomal subunit protein uS3c (rps3) from Solanum lycopersicum (Tomato).